The following is a 271-amino-acid chain: Tryptophan synthase alpha chain (271 aa).

Active-site proton acceptor residues include Glu-49 and Asp-60.

It belongs to the TrpA family. As to quaternary structure, tetramer of two alpha and two beta chains.

The catalysed reaction is (1S,2R)-1-C-(indol-3-yl)glycerol 3-phosphate + L-serine = D-glyceraldehyde 3-phosphate + L-tryptophan + H2O. The protein operates within amino-acid biosynthesis; L-tryptophan biosynthesis; L-tryptophan from chorismate: step 5/5. The alpha subunit is responsible for the aldol cleavage of indoleglycerol phosphate to indole and glyceraldehyde 3-phosphate. In Blochmanniella floridana, this protein is Tryptophan synthase alpha chain.